We begin with the raw amino-acid sequence, 293 residues long: N(1)-aminopropylagmatine ureohydrolase (293 aa).

Mn(2+) contacts are provided by histidine 105, aspartate 128, histidine 130, aspartate 132, aspartate 210, and aspartate 212.

Belongs to the arginase family. The cofactor is Mn(2+).

The protein localises to the cytoplasm. The enzyme catalyses N(1)-(3-aminopropyl)agmatine + H2O = urea + spermidine. Its pathway is amine and polyamine biosynthesis; spermidine biosynthesis. Functionally, involved in the biosynthesis of polyamines which are thought to support the growth of thermophilic microorganisms under high-temperature conditions. It seems that long-chain and branched-chain of polyamines effectively stabilize DNA and RNA, respectively. Catalyzes the decarboxylation of N1-(3-aminopropyl)agmatine to yield spermidine and urea. It cannot use agmatine as substrate. The sequence is that of N(1)-aminopropylagmatine ureohydrolase from Thermus thermophilus (strain ATCC 27634 / DSM 579 / HB8).